We begin with the raw amino-acid sequence, 467 residues long: Asparagine--tRNA ligase (467 aa).

The protein belongs to the class-II aminoacyl-tRNA synthetase family. Homodimer.

The protein resides in the cytoplasm. The enzyme catalyses tRNA(Asn) + L-asparagine + ATP = L-asparaginyl-tRNA(Asn) + AMP + diphosphate + H(+). This is Asparagine--tRNA ligase from Phocaeicola vulgatus (strain ATCC 8482 / DSM 1447 / JCM 5826 / CCUG 4940 / NBRC 14291 / NCTC 11154) (Bacteroides vulgatus).